We begin with the raw amino-acid sequence, 625 residues long: 1-deoxy-D-xylulose-5-phosphate synthase (625 aa).

Thiamine diphosphate is bound by residues His84 and 125 to 127 (GHS). Position 156 (Asp156) interacts with Mg(2+). Thiamine diphosphate-binding positions include 157–158 (GA), Asn185, Phe292, and Glu373. Asn185 contacts Mg(2+).

It belongs to the transketolase family. DXPS subfamily. In terms of assembly, homodimer. Mg(2+) serves as cofactor. It depends on thiamine diphosphate as a cofactor.

The enzyme catalyses D-glyceraldehyde 3-phosphate + pyruvate + H(+) = 1-deoxy-D-xylulose 5-phosphate + CO2. Its pathway is metabolic intermediate biosynthesis; 1-deoxy-D-xylulose 5-phosphate biosynthesis; 1-deoxy-D-xylulose 5-phosphate from D-glyceraldehyde 3-phosphate and pyruvate: step 1/1. In terms of biological role, catalyzes the acyloin condensation reaction between C atoms 2 and 3 of pyruvate and glyceraldehyde 3-phosphate to yield 1-deoxy-D-xylulose-5-phosphate (DXP). This Marinomonas sp. (strain MWYL1) protein is 1-deoxy-D-xylulose-5-phosphate synthase.